The following is a 150-amino-acid chain: UPF0178 protein Shewmr4_1560 (150 aa).

This sequence belongs to the UPF0178 family.

The protein is UPF0178 protein Shewmr4_1560 of Shewanella sp. (strain MR-4).